The following is a 623-amino-acid chain: MAKKNYGQVYNILGWGDPYFTVNSHGHLAVKPHGRDTMSGQDIDVHSVIHRALATTITTNDGDKKPQFPMILRFPDVLKNRLDSLHAAFHGAVDSTGYASRYQGVFPIKVNQNKAVVQDLVTFGHGYSYGLEAGSKPELLIAMSCLAKAKPGAYLVCNGYKDADYVALALSARAMGLNAIIVLEMEEELDIVVEQSARLGVEPVIGVRAKLLTKIPGHFGSTAGKHGKFGMLADKIYEVAGKLKKMGKLHWLKLLHYHVGSMIPTTDIVYNAAAEAAGIYCALVKEHGATGMTTLDCGGGLGVDYDGTRSGSSDMSVAYGLEQYASSIVQAVRLTCDDNGVPHPVLCTESGRAMASHHSMIILEALSAIPEPQDEEDTHHRLLSKIQDLSSKQPRTAHTVNGGGGVDAMHSHAVELKKHGIEMYKLAKKLSKRVTGDANGIYNYHMNLSVFSLVPDFWGIGQLFPMMPVSRLNEKPTINGTLVDITCDSDGKVEKFIRDAVTLPLHPLDDAAAEHGGYYVAALLSGAYQEALACKHNLFSGPTLVRVESAGGGGAFKIVSVELGPTAEEVIGTMRYDVKNDISDVIEKVATENGVWPMVEPLMKKGLTTMPYLNDYKPPKTTF.

Lys-109 carries the N6-(pyridoxal phosphate)lysine modification. Residue 295–305 (LDCGGGLGVDY) participates in substrate binding.

This sequence belongs to the Orn/Lys/Arg decarboxylase class-II family. SpeA subfamily. Pyridoxal 5'-phosphate serves as cofactor. It depends on Mg(2+) as a cofactor. In terms of tissue distribution, expressed in stems (at protein level).

It carries out the reaction L-arginine + H(+) = agmatine + CO2. It participates in amine and polyamine biosynthesis; agmatine biosynthesis; agmatine from L-arginine: step 1/1. This chain is Arginine decarboxylase 2 (ADC2), found in Oryza sativa subsp. japonica (Rice).